The primary structure comprises 324 residues: Methyltransferase pytC (324 aa).

This sequence belongs to the methyltransferase superfamily. LaeA methyltransferase family.

The protein operates within secondary metabolite biosynthesis. Its function is as follows. Methyltransferase; part of the gene cluster that mediates the biosynthesis of pyranterreones, a family of antioxidative compounds. The first step of pyranonigrins biosynthesis is performed by the hybrid PKS-NRPS synthetase pytA that condenses 4 malonyl-CoA units ato the acetyl starter unit by the modular PKS of pytA. The acyl chain is then connected to an L-serine through the amide bond by the modular NRPS of pytA. A tetramic acid is formed and released from the PKS-NRPS pytA to give pyranterreone 5 with the help of the thioesterase pytI. Pyranterreone 5 could be methylated by pytC to afford pyranterreone 6. Both pyranterreones 5 and 6 are subsequently oxidized by the FAD-linked oxidoreductase pytB and the cytochrome P450 monooxygenase pytD to form the fused gamma-pyrone core, resulting in pyranterreones 7 and 11, respectively. The hydroxy group at C-8 of pyranterreones 7 and 11 are dehydrated by the aspartyl protease pytH to form a delta-7 double bond to give pyranterreones 3 and 1, 2 accordingly. The exo-methylene of pyranterreone 3 could be reduced into a pendant methyl by reductase pytE to provide pyranterreone 4, also known as cordylactam. Pyranterreone 4 can be reconverted to pyranterreone 3 through pytB-catalyzed dehydrogenation or further oxidized to pyranterreones 9 and 10. This is Methyltransferase pytC from Aspergillus terreus (strain NIH 2624 / FGSC A1156).